Here is a 321-residue protein sequence, read N- to C-terminus: Methionyl-tRNA formyltransferase (321 aa).

111 to 114 (SLLP) contacts (6S)-5,6,7,8-tetrahydrofolate.

It belongs to the Fmt family.

The catalysed reaction is L-methionyl-tRNA(fMet) + (6R)-10-formyltetrahydrofolate = N-formyl-L-methionyl-tRNA(fMet) + (6S)-5,6,7,8-tetrahydrofolate + H(+). Its function is as follows. Attaches a formyl group to the free amino group of methionyl-tRNA(fMet). The formyl group appears to play a dual role in the initiator identity of N-formylmethionyl-tRNA by promoting its recognition by IF2 and preventing the misappropriation of this tRNA by the elongation apparatus. The protein is Methionyl-tRNA formyltransferase of Bifidobacterium animalis subsp. lactis (strain AD011).